A 375-amino-acid chain; its full sequence is Alpha-2,8-sialyltransferase 8B (375 aa).

The Cytoplasmic segment spans residues 1 to 6 (MQLQFR). The chain crosses the membrane as a helical; Signal-anchor for type II membrane protein span at residues 7 to 23 (SWMLAALTLLVVFLIFA). The Lumenal segment spans residues 24 to 375 (DISEIEEEIG…LTVGQCDGAT (352 aa)). Residues Asn-60, Asn-72, Asn-89, and Asn-134 are each glycosylated (N-linked (GlcNAc...) asparagine). Disulfide bonds link Cys-157/Cys-307 and Cys-171/Cys-371. Positions 162 and 185 each coordinate CMP-N-acetyl-beta-neuraminate. Asn-219 and Asn-234 each carry an N-linked (GlcNAc...) asparagine glycan. Thr-294, Thr-295, Gly-296, Trp-316, Tyr-329, and His-330 together coordinate CMP-N-acetyl-beta-neuraminate. His-346 (proton donor/acceptor) is an active-site residue.

Belongs to the glycosyltransferase 29 family. Autopolysialylated. Autopolysialylation is not a prerequisite for the polysialylation acitity, but enhances the polysialylation acitity.

Its subcellular location is the golgi apparatus membrane. The protein resides in the secreted. It localises to the cell membrane. It carries out the reaction [N-acetyl-alpha-D-neuraminosyl-(2-&gt;8)](n) + CMP-N-acetyl-beta-neuraminate = [N-acetyl-alpha-D-neuraminosyl-(2-&gt;8)](n+1) + CMP + H(+). Its pathway is protein modification; protein glycosylation. Its function is as follows. Catalyzes the transfer of a sialic acid from a CMP-linked sialic acid donor onto a terminal alpha-2,3-, alpha-2,6-, or alpha-2,8-linked sialic acid of an N-linked glycan acceptor through alpha-2,8-linkages. Therefore, participates in polysialic acid synthesis on various sialylated N-acetyllactosaminyl oligosaccharides (alpha-2,3-, alpha-2,6-, or alpha-2,8-linked sialic acid), including NCAM1, NCAM1 N-glycans, FETUB N-glycans, and to a lesser extent sialylparagloboside (SPG) and AHSG, which does not require the initial addition of an alpha 2,8-sialic acid. However, does not exhibit sialic acid-polymerase activity. Catalyzes polysialic acid synthesis in the hippocampal on NCAM1 and supports neurite outgrowth. ST8SIA2-mediated polysialylation influences on oligodendrocyte differentiation and may promote the integrity of myelin and axons. This chain is Alpha-2,8-sialyltransferase 8B, found in Mus musculus (Mouse).